Consider the following 333-residue polypeptide: MAKIYYDEDASLGILAMKTVAIVGYGSQGHAHALNLRDSGIRVIVALDDKSPHRKTAMEDGFSVYTTSRATQEADVIMILTPDTVQPAVYKECIEPNLTPGKAIAFAHGFNIHFGQIVPPKDIDVFMVAPKGPGHLVRWMYEEGKGVPALISIHQDATGSCRDIALAYAKGIGATRAGVIETTFREETETDLFGEQAVLCGGATALIKAGFETLVEAGYQPEMAYFECLHELKLIVDLIYQHGIAGMRYSISDTAKYGDVTRGDRVYEAVKPLMKQMLKEIQDGEFAREWILENQANRPVYNALLNKDKEHLVEKVGKELRQMMPWLSGKELK.

The KARI N-terminal Rossmann domain occupies 2–182 (AKIYYDEDAS…GATRAGVIET (181 aa)). NADP(+)-binding positions include 25-28 (YGSQ), S51, and 83-86 (DTVQ). Residue H108 is part of the active site. An NADP(+)-binding site is contributed by G134. The 145-residue stretch at 183–327 (TFREETETDL…KELRQMMPWL (145 aa)) folds into the KARI C-terminal knotted domain. Residues D191, E195, E227, and E231 each contribute to the Mg(2+) site. S252 provides a ligand contact to substrate.

The protein belongs to the ketol-acid reductoisomerase family. The cofactor is Mg(2+).

It catalyses the reaction (2R)-2,3-dihydroxy-3-methylbutanoate + NAD(+) = (2S)-2-acetolactate + NADH + H(+). The enzyme catalyses (2R)-2,3-dihydroxy-3-methylbutanoate + NADP(+) = (2S)-2-acetolactate + NADPH + H(+). The protein operates within amino-acid biosynthesis; L-isoleucine biosynthesis; L-isoleucine from 2-oxobutanoate: step 2/4. It functions in the pathway amino-acid biosynthesis; L-valine biosynthesis; L-valine from pyruvate: step 2/4. Involved in the biosynthesis of branched-chain amino acids (BCAA). Catalyzes an alkyl-migration followed by a ketol-acid reduction of (S)-2-acetolactate (S2AL) to yield (R)-2,3-dihydroxy-isovalerate. In the isomerase reaction, S2AL is rearranged via a Mg-dependent methyl migration to produce 3-hydroxy-3-methyl-2-ketobutyrate (HMKB). In the reductase reaction, this 2-ketoacid undergoes a metal-dependent reduction by NADPH or NADH to yield (R)-2,3-dihydroxy-isovalerate. The chain is Ketol-acid reductoisomerase (NAD(P)(+)) from Hydrogenobaculum sp. (strain Y04AAS1).